The sequence spans 414 residues: Esterase FrsA (414 aa).

The protein belongs to the FrsA family.

The enzyme catalyses a carboxylic ester + H2O = an alcohol + a carboxylate + H(+). In terms of biological role, catalyzes the hydrolysis of esters. The polypeptide is Esterase FrsA (Salmonella typhi).